A 170-amino-acid polypeptide reads, in one-letter code: Large ribosomal subunit protein uL22c (170 aa).

The protein belongs to the universal ribosomal protein uL22 family. As to quaternary structure, part of the 50S ribosomal subunit.

The protein resides in the plastid. It is found in the chloroplast. Functionally, this protein binds specifically to 23S rRNA. The globular domain of the protein is located near the polypeptide exit tunnel on the outside of the subunit, while an extended beta-hairpin is found that lines the wall of the exit tunnel in the center of the 70S ribosome. The protein is Large ribosomal subunit protein uL22c (rpl22) of Nandina domestica (Heavenly bamboo).